Reading from the N-terminus, the 259-residue chain is tRNA (guanine-N(1)-)-methyltransferase (259 aa).

S-adenosyl-L-methionine-binding positions include Gly113 and 133–138 (IGDYVL).

This sequence belongs to the RNA methyltransferase TrmD family. Homodimer.

It localises to the cytoplasm. The enzyme catalyses guanosine(37) in tRNA + S-adenosyl-L-methionine = N(1)-methylguanosine(37) in tRNA + S-adenosyl-L-homocysteine + H(+). In terms of biological role, specifically methylates guanosine-37 in various tRNAs. The chain is tRNA (guanine-N(1)-)-methyltransferase from Xanthomonas oryzae pv. oryzae (strain MAFF 311018).